Here is a 422-residue protein sequence, read N- to C-terminus: Serine--tRNA ligase (422 aa).

Residue T229–E231 coordinates L-serine. ATP-binding positions include R260 to E262 and V276. L-serine is bound at residue E283. E349–S352 serves as a coordination point for ATP. T384 contacts L-serine.

This sequence belongs to the class-II aminoacyl-tRNA synthetase family. Type-1 seryl-tRNA synthetase subfamily. As to quaternary structure, homodimer. The tRNA molecule binds across the dimer.

It localises to the cytoplasm. The catalysed reaction is tRNA(Ser) + L-serine + ATP = L-seryl-tRNA(Ser) + AMP + diphosphate + H(+). The enzyme catalyses tRNA(Sec) + L-serine + ATP = L-seryl-tRNA(Sec) + AMP + diphosphate + H(+). It participates in aminoacyl-tRNA biosynthesis; selenocysteinyl-tRNA(Sec) biosynthesis; L-seryl-tRNA(Sec) from L-serine and tRNA(Sec): step 1/1. Catalyzes the attachment of serine to tRNA(Ser). Is also able to aminoacylate tRNA(Sec) with serine, to form the misacylated tRNA L-seryl-tRNA(Sec), which will be further converted into selenocysteinyl-tRNA(Sec). This is Serine--tRNA ligase from Treponema denticola (strain ATCC 35405 / DSM 14222 / CIP 103919 / JCM 8153 / KCTC 15104).